We begin with the raw amino-acid sequence, 365 residues long: Mitogen-activated protein kinase hog1 (365 aa).

The 280-residue stretch at 20–299 (YTDLQPVGMG…AGEALAHEYL (280 aa)) folds into the Protein kinase domain. Residues 26 to 34 (VGMGAFGLV) and lysine 49 each bind ATP. The active-site Proton acceptor is the aspartate 141. At threonine 171 the chain carries Phosphothreonine. Residues 171–173 (TGY) carry the TXY motif. At tyrosine 173 the chain carries Phosphotyrosine.

The protein belongs to the protein kinase superfamily. Ser/Thr protein kinase family. MAP kinase subfamily. HOG1 sub-subfamily. Mg(2+) serves as cofactor. Post-translationally, dually phosphorylated on Thr-171 and Tyr-173, which activates the enzyme.

The protein localises to the cytoplasm. It localises to the nucleus. The catalysed reaction is L-seryl-[protein] + ATP = O-phospho-L-seryl-[protein] + ADP + H(+). It catalyses the reaction L-threonyl-[protein] + ATP = O-phospho-L-threonyl-[protein] + ADP + H(+). With respect to regulation, activated by tyrosine and threonine phosphorylation. Its function is as follows. Proline-directed serine/threonine-protein kinase involved in a signal transduction pathway that is activated by changes in the osmolarity of the extracellular environment. Controls osmotic regulation of transcription of target genes. The polypeptide is Mitogen-activated protein kinase hog1 (hog1) (Aspergillus niger (strain ATCC MYA-4892 / CBS 513.88 / FGSC A1513)).